We begin with the raw amino-acid sequence, 1072 residues long: Integrator complex subunit 3 homolog (1072 aa).

2 disordered regions span residues 920 to 943 and 1002 to 1072; these read YPSSSPNKRKRPPKGISVSTSTPS and DTTV…NDSD. S1042, S1043, S1047, and S1048 each carry phosphoserine.

It belongs to the Integrator subunit 3 family. In terms of assembly, belongs to the multiprotein complex Integrator, at least composed of IntS1, IntS2, IntS3, IntS4, omd/IntS5, IntS6, defl/IntS7, IntS8, IntS9, IntS10, IntS11, IntS12, asun/IntS13, IntS14 and IntS15. The core complex associates with protein phosphatase 2A subunits mts/PP2A and Pp2A-29B, to form the Integrator-PP2A (INTAC) complex.

The protein localises to the nucleus. It is found in the cytoplasm. Its function is as follows. Component of the integrator complex, a multiprotein complex that terminates RNA polymerase II (Pol II) transcription in the promoter-proximal region of genes. The integrator complex provides a quality checkpoint during transcription elongation by driving premature transcription termination of transcripts that are unfavorably configured for transcriptional elongation: the complex terminates transcription by (1) catalyzing dephosphorylation of the C-terminal domain (CTD) of Pol II subunit Polr2A/Rbp1 and Spt5, and (2) degrading the exiting nascent RNA transcript via endonuclease activity. The integrator complex is also involved in the 3'-end processing of the U7 snRNA, and also the spliceosomal snRNAs U1, U2, U4 and U5. The polypeptide is Integrator complex subunit 3 homolog (IntS3) (Drosophila yakuba (Fruit fly)).